The primary structure comprises 585 residues: Voltage-gated potassium channel KCNC1 (585 aa).

Over 1-190 (MGQGDESERI…EDPYSSRYAR (190 aa)) the chain is Cytoplasmic. S44 is subject to Phosphoserine. Residues H77, C83, C104, and C105 each contribute to the Zn(2+) site. Residues 121–147 (SFGGAPLDNSADDADADGPGDSGDGED) form a disordered region. S130, S142, S158, and S160 each carry phosphoserine. Residues 130–147 (SADDADADGPGDSGDGED) show a composition bias toward acidic residues. Residues 191–209 (YVAFASLFFILVSITTFCL) form a helical membrane-spanning segment. N220 and N229 each carry an N-linked (GlcNAc...) asparagine glycan. A helical transmembrane segment spans residues 248 to 267 (IEGVCVVWFTFEFLMRVVFC). At 268–276 (PNKVEFIKN) the chain is on the cytoplasmic side. A helical membrane pass occupies residues 277–295 (SLNIIDFVAILPFYLEVGL). A helical; Voltage-sensor transmembrane segment spans residues 309-331 (FLRVVRFVRILRIFKLTRHFVGL). Over 332–344 (RVLGHTLRASTNE) the chain is Cytoplasmic. The chain crosses the membrane as a helical span at residues 345-366 (FLLLIIFLALGVLIFATMIYYA). 4 residues coordinate K(+): T400, L401, G402, and Y403. The short motif at 400 to 405 (TLGYGD) is the Selectivity filter element. The helical transmembrane segment at 415–436 (LVGALCALAGVLTIAMPVPVIV) threads the bilayer. The Cytoplasmic segment spans residues 437 to 585 (NNFGMYYSLA…YMPTEAVRVT (149 aa)). S474 bears the Phosphoserine mark. T483 bears the Phosphothreonine mark.

Belongs to the potassium channel family. C (Shaw) (TC 1.A.1.2) subfamily. Kv3.1/KCNC1 sub-subfamily. In terms of assembly, homotetramer. Homomultimer. Heteromultimer with KCNG3, KCNG4 and KCNV2. Heteromultimer with KCNC2. Heterotetramer with KCNC3. Interacts with the ancillary subunits KCNE1 and KCNE2; the interaction modulates channel activity. N-glycosylated; contains sialylated glycans. Expressed in brain. Expressed in globus pallidal neurons of the basal ganglia (at protein level). Detected on Purkinje cells in the cerebellum molecular layer (at protein level).

Its subcellular location is the cell membrane. It is found in the cell projection. The protein resides in the axon. It localises to the presynaptic cell membrane. The enzyme catalyses K(+)(in) = K(+)(out). Its function is as follows. Voltage-gated potassium channel that opens in response to the voltage difference across the membrane and through which potassium ions pass in accordance with their electrochemical gradient. The mechanism is time-dependent and inactivation is slow. Plays an important role in the rapid repolarization of fast-firing brain neurons. Can form functional homotetrameric channels and heterotetrameric channels that contain variable proportions of KCNC2, and possibly other family members as well. Contributes to fire sustained trains of very brief action potentials at high frequency in pallidal neurons. This chain is Voltage-gated potassium channel KCNC1, found in Rattus norvegicus (Rat).